Reading from the N-terminus, the 626-residue chain is Myelin-associated glycoprotein (626 aa).

A signal peptide spans 1-19; that stretch reads MIFLTALPLFWIMISASRG. The segment at 20–325 is interaction with RTN4R and RTN4RL2; sequence GHWGAWMPSS…RTVGLSVMYA (306 aa). Topologically, residues 20-516 are extracellular; it reads GHWGAWMPSS…HRLMWAKIGP (497 aa). The 99-residue stretch at 22–120 folds into the Ig-like V-type domain; the sequence is WGAWMPSSIS…LGGKYYFRGD (99 aa). 3 disulfide bridges follow: Cys-37/Cys-165, Cys-42/Cys-100, and Cys-159/Cys-217. Residue 65 to 67 participates in a ganglioside GT1b (d18:1(4E)) binding; it reads YPK. A glycan (N-linked (GlcNAc...) asparagine) is linked at Asn-99. A glycan (N-linked (GlcNAc...) asparagine; partial) is linked at Asn-106. A ganglioside GT1b (d18:1(4E))-binding positions include Arg-118 and 124–128; that span reads YNQYT. 4 Ig-like C2-type domains span residues 139-237, 241-325, 327-412, and 413-508; these read NTPN…MDVK, VIVE…VMYA, WKPT…VEFA, and PVLL…GAHR. 2 N-linked (GlcNAc...) asparagine glycosylation sites follow: Asn-223 and Asn-246. Residues Cys-261 and Cys-305 are joined by a disulfide bond. Asn-315 is a glycosylation site (N-linked (GlcNAc...) asparagine). Cysteines 347 and 392 form a disulfide. Residue Asn-406 is glycosylated (N-linked (GlcNAc...) asparagine). Cystine bridges form between Cys-421–Cys-430 and Cys-432–Cys-488. N-linked (GlcNAc...) asparagine glycosylation is found at Asn-450 and Asn-454. Residues 517-536 traverse the membrane as a helical segment; the sequence is VGAVVAFAILIAIVCYITQT. A lipid anchor (S-palmitoyl cysteine) is attached at Cys-531. The Cytoplasmic segment spans residues 537–626; sequence RRKKNVTESP…LAEYAEIRVK (90 aa). 3 positions are modified to phosphoserine: Ser-545, Ser-547, and Ser-549. Residues 577–626 form a required for normal axon myelination in the central nervous system region; sequence LGSERRLLGLRGEPPELDLSYSHSDLGKRPTKDSYTLTEELAEYAEIRVK. Residues 582-608 form a disordered region; it reads RLLGLRGEPPELDLSYSHSDLGKRPTK.

Belongs to the immunoglobulin superfamily. SIGLEC (sialic acid binding Ig-like lectin) family. Monomer and homodimer. Interacts (via the first three N-terminal Ig-like domains) with RTN4R and RTN4RL2. Interacts with RTN4R. Interacts with isoform 2 of BSG. In terms of processing, N-glycosylated. Post-translationally, phosphorylated on tyrosine residues. Ubiquitinated, leading to proteasomal degradation. As to expression, both isoform 1 and isoform 2 are detected in myelinated structures in the central and peripheral nervous system, in periaxonal myelin and at Schmidt-Lanterman incisures. Detected in optic nerve, in oligodendroglia and in periaxonal myelin sheaths. Detected in compact myelin (at protein level). Both isoform 1 and isoform 2 are detected in the central and peripheral nervous system.

Its subcellular location is the cell membrane. The protein localises to the membrane raft. Its function is as follows. Adhesion molecule that mediates interactions between myelinating cells and neurons by binding to neuronal sialic acid-containing gangliosides and to the glycoproteins RTN4R and RTN4RL2. Not required for initial myelination, but seems to play a role in the maintenance of normal axon myelination. Protects motoneurons against apoptosis, also after injury; protection against apoptosis is probably mediated via interaction with neuronal RTN4R and RTN4RL2. Required to prevent degeneration of myelinated axons in adults; this probably depends on binding to gangliosides on the axon cell membrane. Negative regulator of neurite outgrowth; in dorsal root ganglion neurons the inhibition is mediated primarily via binding to neuronal RTN4R or RTN4RL2 and to a lesser degree via binding to neuronal gangliosides. In cerebellar granule cells the inhibition is mediated primarily via binding to neuronal gangliosides. In sensory neurons, inhibition of neurite extension depends only partially on RTN4R, RTN4RL2 and gangliosides. Inhibits axon longitudinal growth. Inhibits axon outgrowth by binding to RTN4R. Preferentially binds to alpha-2,3-linked sialic acid. Binds ganglioside Gt1b. This is Myelin-associated glycoprotein (MAG) from Homo sapiens (Human).